A 365-amino-acid chain; its full sequence is UDP-N-acetylglucosamine--N-acetylmuramyl-(pentapeptide) pyrophosphoryl-undecaprenol N-acetylglucosamine transferase (365 aa).

Residues 11–13 (TGG), Asn124, Arg165, Ser192, Ile246, and Gln291 contribute to the UDP-N-acetyl-alpha-D-glucosamine site.

It belongs to the glycosyltransferase 28 family. MurG subfamily.

It localises to the cell inner membrane. The catalysed reaction is di-trans,octa-cis-undecaprenyl diphospho-N-acetyl-alpha-D-muramoyl-L-alanyl-D-glutamyl-meso-2,6-diaminopimeloyl-D-alanyl-D-alanine + UDP-N-acetyl-alpha-D-glucosamine = di-trans,octa-cis-undecaprenyl diphospho-[N-acetyl-alpha-D-glucosaminyl-(1-&gt;4)]-N-acetyl-alpha-D-muramoyl-L-alanyl-D-glutamyl-meso-2,6-diaminopimeloyl-D-alanyl-D-alanine + UDP + H(+). The protein operates within cell wall biogenesis; peptidoglycan biosynthesis. Cell wall formation. Catalyzes the transfer of a GlcNAc subunit on undecaprenyl-pyrophosphoryl-MurNAc-pentapeptide (lipid intermediate I) to form undecaprenyl-pyrophosphoryl-MurNAc-(pentapeptide)GlcNAc (lipid intermediate II). In Nitratidesulfovibrio vulgaris (strain DP4) (Desulfovibrio vulgaris), this protein is UDP-N-acetylglucosamine--N-acetylmuramyl-(pentapeptide) pyrophosphoryl-undecaprenol N-acetylglucosamine transferase.